The following is a 571-amino-acid chain: Proline--tRNA ligase (571 aa).

This sequence belongs to the class-II aminoacyl-tRNA synthetase family. ProS type 1 subfamily. Homodimer.

The protein resides in the cytoplasm. It carries out the reaction tRNA(Pro) + L-proline + ATP = L-prolyl-tRNA(Pro) + AMP + diphosphate. Catalyzes the attachment of proline to tRNA(Pro) in a two-step reaction: proline is first activated by ATP to form Pro-AMP and then transferred to the acceptor end of tRNA(Pro). As ProRS can inadvertently accommodate and process non-cognate amino acids such as alanine and cysteine, to avoid such errors it has two additional distinct editing activities against alanine. One activity is designated as 'pretransfer' editing and involves the tRNA(Pro)-independent hydrolysis of activated Ala-AMP. The other activity is designated 'posttransfer' editing and involves deacylation of mischarged Ala-tRNA(Pro). The misacylated Cys-tRNA(Pro) is not edited by ProRS. This Aliivibrio fischeri (strain MJ11) (Vibrio fischeri) protein is Proline--tRNA ligase.